A 530-amino-acid polypeptide reads, in one-letter code: Phosphoenolpyruvate carboxykinase (ATP) (530 aa).

Residues Arg58, Tyr195, and Lys201 each contribute to the substrate site. ATP contacts are provided by residues Lys201, His220, and 236-244; that span reads GLSGTGKTT. 2 residues coordinate Mn(2+): Lys201 and His220. Asp257 provides a ligand contact to Mn(2+). ATP contacts are provided by residues Glu285, Arg321, 440–441, and Thr446; that span reads RI. Position 321 (Arg321) interacts with substrate.

Belongs to the phosphoenolpyruvate carboxykinase (ATP) family. The cofactor is Mn(2+).

The protein resides in the cytoplasm. It carries out the reaction oxaloacetate + ATP = phosphoenolpyruvate + ADP + CO2. It participates in carbohydrate biosynthesis; gluconeogenesis. Its function is as follows. Involved in the gluconeogenesis. Catalyzes the conversion of oxaloacetate (OAA) to phosphoenolpyruvate (PEP) through direct phosphoryl transfer between the nucleoside triphosphate and OAA. The chain is Phosphoenolpyruvate carboxykinase (ATP) from Staphylococcus aureus (strain bovine RF122 / ET3-1).